Consider the following 175-residue polypeptide: Crossover junction endodeoxyribonuclease RuvC (175 aa).

Catalysis depends on residues aspartate 12, glutamate 72, and aspartate 144. The Mg(2+) site is built by aspartate 12, glutamate 72, and aspartate 144.

This sequence belongs to the RuvC family. Homodimer which binds Holliday junction (HJ) DNA. The HJ becomes 2-fold symmetrical on binding to RuvC with unstacked arms; it has a different conformation from HJ DNA in complex with RuvA. In the full resolvosome a probable DNA-RuvA(4)-RuvB(12)-RuvC(2) complex forms which resolves the HJ. Requires Mg(2+) as cofactor.

It localises to the cytoplasm. The catalysed reaction is Endonucleolytic cleavage at a junction such as a reciprocal single-stranded crossover between two homologous DNA duplexes (Holliday junction).. Its function is as follows. The RuvA-RuvB-RuvC complex processes Holliday junction (HJ) DNA during genetic recombination and DNA repair. Endonuclease that resolves HJ intermediates. Cleaves cruciform DNA by making single-stranded nicks across the HJ at symmetrical positions within the homologous arms, yielding a 5'-phosphate and a 3'-hydroxyl group; requires a central core of homology in the junction. The consensus cleavage sequence is 5'-(A/T)TT(C/G)-3'. Cleavage occurs on the 3'-side of the TT dinucleotide at the point of strand exchange. HJ branch migration catalyzed by RuvA-RuvB allows RuvC to scan DNA until it finds its consensus sequence, where it cleaves and resolves the cruciform DNA. This is Crossover junction endodeoxyribonuclease RuvC from Beijerinckia indica subsp. indica (strain ATCC 9039 / DSM 1715 / NCIMB 8712).